A 755-amino-acid polypeptide reads, in one-letter code: Thermostable beta-glucosidase B (755 aa).

Aspartate 231 is a catalytic residue.

The protein belongs to the glycosyl hydrolase 3 family.

The catalysed reaction is Hydrolysis of terminal, non-reducing beta-D-glucosyl residues with release of beta-D-glucose.. It participates in glycan metabolism; cellulose degradation. The sequence is that of Thermostable beta-glucosidase B (bglB) from Acetivibrio thermocellus (strain ATCC 27405 / DSM 1237 / JCM 9322 / NBRC 103400 / NCIMB 10682 / NRRL B-4536 / VPI 7372) (Clostridium thermocellum).